The following is a 298-amino-acid chain: Homoserine kinase (298 aa).

Residue 83-93 participates in ATP binding; sequence PISRGLGSSSS.

The protein belongs to the GHMP kinase family. Homoserine kinase subfamily.

It localises to the cytoplasm. It carries out the reaction L-homoserine + ATP = O-phospho-L-homoserine + ADP + H(+). The protein operates within amino-acid biosynthesis; L-threonine biosynthesis; L-threonine from L-aspartate: step 4/5. In terms of biological role, catalyzes the ATP-dependent phosphorylation of L-homoserine to L-homoserine phosphate. The polypeptide is Homoserine kinase (Clostridium botulinum (strain Alaska E43 / Type E3)).